A 407-amino-acid polypeptide reads, in one-letter code: POC1 centriolar protein homolog A (407 aa).

7 WD repeats span residues Gly17–Arg56, Gly59–Val98, Ala101–Ser140, Gln143–Ser182, Glu185–His224, Leu227–Thr266, and Gly269–Gly308. The interval Pro317–Gln357 is disordered. The span at Gln342–Gln357 shows a compositional bias: polar residues. Residues Gln369–Asn397 adopt a coiled-coil conformation.

The protein belongs to the WD repeat POC1 family. As to quaternary structure, interacts with POC1B.

Its subcellular location is the cytoplasm. It is found in the cytoskeleton. The protein resides in the microtubule organizing center. The protein localises to the centrosome. It localises to the centriole. Its subcellular location is the cilium basal body. It is found in the spindle pole. In terms of biological role, plays an important role in centriole assembly and/or stability and ciliogenesis. Involved in early steps of centriole duplication, as well as in the later steps of centriole length control. Acts in concert with POC1B to ensure centriole integrity and proper mitotic spindle formation. The polypeptide is POC1 centriolar protein homolog A (POC1A) (Bos taurus (Bovine)).